Here is a 143-residue protein sequence, read N- to C-terminus: SsrA-binding protein (143 aa).

The protein belongs to the SmpB family.

The protein resides in the cytoplasm. Required for rescue of stalled ribosomes mediated by trans-translation. Binds to transfer-messenger RNA (tmRNA), required for stable association of tmRNA with ribosomes. tmRNA and SmpB together mimic tRNA shape, replacing the anticodon stem-loop with SmpB. tmRNA is encoded by the ssrA gene; the 2 termini fold to resemble tRNA(Ala) and it encodes a 'tag peptide', a short internal open reading frame. During trans-translation Ala-aminoacylated tmRNA acts like a tRNA, entering the A-site of stalled ribosomes, displacing the stalled mRNA. The ribosome then switches to translate the ORF on the tmRNA; the nascent peptide is terminated with the 'tag peptide' encoded by the tmRNA and targeted for degradation. The ribosome is freed to recommence translation, which seems to be the essential function of trans-translation. This chain is SsrA-binding protein, found in Mycoplasmoides gallisepticum (strain R(low / passage 15 / clone 2)) (Mycoplasma gallisepticum).